A 97-amino-acid chain; its full sequence is Apolipoprotein C-II (97 aa).

The signal sequence occupies residues 1 to 22 (MGSRFFLALFLALLVLGNEVQG). The segment at 63 to 71 (SVDEKLRDM) is lipid binding. A lipoprotein lipase cofactor region spans residues 75 to 97 (SSAAMTTYAGIFTDQLLTLLKGE).

The protein belongs to the apolipoprotein C2 family. In terms of processing, proapolipoprotein C-II is synthesized as a sialic acid containing glycoprotein which is subsequently desialylated prior to its proteolytic processing. Proapolipoprotein C-II, the major form found in plasma undergoes proteolytic cleavage of its N-terminal hexapeptide to generate the mature form apolipoprotein C-II, which occurs as the minor form in plasma.

It localises to the secreted. Functionally, component of chylomicrons, very low-density lipoproteins (VLDL), low-density lipoproteins (LDL), and high-density lipoproteins (HDL) in plasma. Plays an important role in lipoprotein metabolism as an activator of lipoprotein lipase. The sequence is that of Apolipoprotein C-II (Apoc2) from Rattus norvegicus (Rat).